A 485-amino-acid chain; its full sequence is NADH-quinone oxidoreductase subunit N (485 aa).

The next 14 membrane-spanning stretches (helical) occupy residues 8–28 (LIAL…MLSI), 35–55 (FLNA…LWFV), 71–91 (GFAM…CTFA), 105–125 (FYLL…ANHL), 127–147 (TLFL…GYAF), 159–179 (YTIL…LVYA), 203–223 (LLAG…LVPF), 235–255 (PAPV…GVVM), 271–291 (VVLG…ALSQ), 297–317 (LLGY…IALQ), 326–346 (VGVY…VVSL), 373–393 (AAVM…LGFI), 408–430 (WWLV…RVAV), and 455–475 (IVVL…QPLI).

The protein belongs to the complex I subunit 2 family. As to quaternary structure, NDH-1 is composed of 13 different subunits. Subunits NuoA, H, J, K, L, M, N constitute the membrane sector of the complex.

The protein localises to the cell inner membrane. It carries out the reaction a quinone + NADH + 5 H(+)(in) = a quinol + NAD(+) + 4 H(+)(out). Its function is as follows. NDH-1 shuttles electrons from NADH, via FMN and iron-sulfur (Fe-S) centers, to quinones in the respiratory chain. The immediate electron acceptor for the enzyme in this species is believed to be ubiquinone. Couples the redox reaction to proton translocation (for every two electrons transferred, four hydrogen ions are translocated across the cytoplasmic membrane), and thus conserves the redox energy in a proton gradient. This chain is NADH-quinone oxidoreductase subunit N, found in Salmonella paratyphi A (strain ATCC 9150 / SARB42).